We begin with the raw amino-acid sequence, 240 residues long: Chromatin structure-remodeling complex protein BSH (240 aa).

Belongs to the SNF5 family. In terms of assembly, interacts with SWI3A and SWI3B, but not with BRM. Expressed in roots, stems, leaves, flowers and siliques.

Its subcellular location is the nucleus. Its function is as follows. Component of a multiprotein complex equivalent of the yeast SWI/SNF complex, an ATP-dependent chromatin-remodeling complex, which is required for the positive and negative regulation of gene expression of a large number of genes. It changes chromatin structure by altering DNA-histone contacts within a nucleosome, leading eventually to a change in nucleosome position, thus facilitating or repressing binding of gene-specific transcription factors. In Arabidopsis thaliana (Mouse-ear cress), this protein is Chromatin structure-remodeling complex protein BSH (BSH).